The sequence spans 542 residues: Zinc finger CCHC domain-containing protein 7 (542 aa).

Residues Gln-110–Ser-144 form a disordered region. Residues Gln-112 to Val-126 show a composition bias toward polar residues. Glycyl lysine isopeptide (Lys-Gly) (interchain with G-Cter in SUMO2) cross-links involve residues Lys-129 and Lys-136. A Phosphoserine modification is found at Ser-142. Glycyl lysine isopeptide (Lys-Gly) (interchain with G-Cter in SUMO2) cross-links involve residues Lys-236 and Lys-251. CCHC-type zinc fingers lie at residues Val-238–Leu-255, Arg-260–Ala-277, and Lys-301–Glu-318. Residue Lys-336 forms a Glycyl lysine isopeptide (Lys-Gly) (interchain with G-Cter in SUMO2) linkage. The CCHC-type 4 zinc-finger motif lies at Val-345–Glu-362. A disordered region spans residues Leu-396–Phe-542. Lys-410 participates in a covalent cross-link: Glycyl lysine isopeptide (Lys-Gly) (interchain with G-Cter in SUMO2). The span at Pro-412–His-421 shows a compositional bias: basic and acidic residues. Over residues His-422–Arg-435 the composition is skewed to basic residues. A Glycyl lysine isopeptide (Lys-Gly) (interchain with G-Cter in SUMO2) cross-link involves residue Lys-432. Basic and acidic residues predominate over residues Trp-436–His-456. A Glycyl lysine isopeptide (Lys-Gly) (interchain with G-Cter in SUMO2) cross-link involves residue Lys-474. Low complexity predominate over residues Lys-474 to Ser-489. A phosphoserine mark is found at Ser-478 and Ser-480. Glycyl lysine isopeptide (Lys-Gly) (interchain with G-Cter in SUMO2) cross-links involve residues Lys-485 and Lys-488. Basic and acidic residues-rich tracts occupy residues Leu-499–Arg-510 and Phe-518–Phe-528. A Glycyl lysine isopeptide (Lys-Gly) (interchain with G-Cter in SUMO2) cross-link involves residue Lys-531. Residues Lys-531–Phe-542 show a composition bias toward basic residues.

Component of a nucleolar TRAMP-like complex, an ATP-dependent exosome regulatory complex consisting of a helicase (MTREX), an oligadenylate polymerase (TENT4B or TENT4A), and a substrate specific RNA-binding factor (ZCCHC7 or ZCCHC8). Several TRAMP-like complexes exist with specific compositions and are associated with nuclear, or nucleolar RNA exosomes.

It localises to the nucleus. Its subcellular location is the nucleolus. The sequence is that of Zinc finger CCHC domain-containing protein 7 (Zcchc7) from Rattus norvegicus (Rat).